We begin with the raw amino-acid sequence, 167 residues long: Crossover junction endodeoxyribonuclease RuvC (167 aa).

Residues Asp-7, Glu-67, and Asp-139 contribute to the active site. Mg(2+) is bound by residues Asp-7, Glu-67, and Asp-139.

The protein belongs to the RuvC family. As to quaternary structure, homodimer which binds Holliday junction (HJ) DNA. The HJ becomes 2-fold symmetrical on binding to RuvC with unstacked arms; it has a different conformation from HJ DNA in complex with RuvA. In the full resolvosome a probable DNA-RuvA(4)-RuvB(12)-RuvC(2) complex forms which resolves the HJ. Mg(2+) is required as a cofactor.

The protein localises to the cytoplasm. The catalysed reaction is Endonucleolytic cleavage at a junction such as a reciprocal single-stranded crossover between two homologous DNA duplexes (Holliday junction).. The RuvA-RuvB-RuvC complex processes Holliday junction (HJ) DNA during genetic recombination and DNA repair. Endonuclease that resolves HJ intermediates. Cleaves cruciform DNA by making single-stranded nicks across the HJ at symmetrical positions within the homologous arms, yielding a 5'-phosphate and a 3'-hydroxyl group; requires a central core of homology in the junction. The consensus cleavage sequence is 5'-(A/T)TT(C/G)-3'. Cleavage occurs on the 3'-side of the TT dinucleotide at the point of strand exchange. HJ branch migration catalyzed by RuvA-RuvB allows RuvC to scan DNA until it finds its consensus sequence, where it cleaves and resolves the cruciform DNA. The sequence is that of Crossover junction endodeoxyribonuclease RuvC from Zymomonas mobilis subsp. mobilis (strain ATCC 31821 / ZM4 / CP4).